The sequence spans 497 residues: Tripartite motif-containing protein 5 (497 aa).

Ala2 bears the N-acetylalanine mark. An RING-type zinc finger spans residues 15-60 (CPICLELLTEPLSLHCGHSFCQACITANHKKSMLYKEGERSCPVCR). At Ser87 the chain carries Phosphoserine. A B box-type zinc finger spans residues 92–133 (QKVDHCARHGEKLLLFCQEDSKVICWLCERSQEHRGHHTFLM). Positions 97, 100, 119, and 125 each coordinate Zn(2+). A coiled-coil region spans residues 137-225 (AQEYHVKLQT…LTKSETEMVQ (89 aa)). A required for interaction with GABARAP and for autophagy region spans residues 187 to 200 (FEQLREILDWEESN). Residues 283 to 497 (LKGMLDMFRE…VPMTLCSPSS (215 aa)) enclose the B30.2/SPRY domain.

It belongs to the TRIM/RBCC family. As to quaternary structure, can form homodimers and homotrimers. In addition to lower-order dimerization, also exhibits a higher-order multimerization and both low- and high-order multimerizations are essential for its restriction activity. Interacts with MAP3K7/TAK1, TAB2 and TAB3. Interacts with HSPA8/HSC70, PSMC2, PSMC4, PSMC5 and PSMD7. Interacts with SQSTM1. Interacts (via B30.2/SPRY domain) with HSPA1A/B. Interacts with TRIM6 and TRIM34. Interacts with BECN1; GABARAP. Interacts with ULK1 (phosphorylated form), GABARAPL1, GABARAPL2, MAP1LC3A and MAP1LC3C. Degraded in a proteasome-independent fashion in the absence of viral infection but in a proteasome-dependent fashion following exposure to restriction sensitive virus. Post-translationally, autoubiquitinated in a RING finger- and UBE2D2-dependent manner. Monoubiquitinated by TRIM21. Deubiquitinated by Yersinia YopJ. Ubiquitination may not lead to proteasomal degradation.

It localises to the cytoplasm. The protein resides in the nucleus. It carries out the reaction S-ubiquitinyl-[E2 ubiquitin-conjugating enzyme]-L-cysteine + [acceptor protein]-L-lysine = [E2 ubiquitin-conjugating enzyme]-L-cysteine + N(6)-ubiquitinyl-[acceptor protein]-L-lysine.. It functions in the pathway protein modification; protein ubiquitination. Capsid-specific restriction factor that prevents infection from non-host-adapted retroviruses. Blocks viral replication early in the life cycle, after viral entry but before reverse transcription. In addition to acting as a capsid-specific restriction factor, also acts as a pattern recognition receptor that activates innate immune signaling in response to the retroviral capsid lattice. Binding to the viral capsid triggers its E3 ubiquitin ligase activity, and in concert with the heterodimeric ubiquitin conjugating enzyme complex UBE2V1-UBE2N (also known as UBC13-UEV1A complex) generates 'Lys-63'-linked polyubiquitin chains, which in turn are catalysts in the autophosphorylation of the MAP3K7/TAK1 complex (includes TAK1, TAB2, and TAB3). Activation of the MAP3K7/TAK1 complex by autophosphorylation results in the induction and expression of NF-kappa-B and MAPK-responsive inflammatory genes, thereby leading to an innate immune response in the infected cell. Restricts infection by human immunodeficiency virus type 1 (HIV-1) and simian immunodeficiency virus (SIV-agm). Plays a role in regulating autophagy through activation of autophagy regulator BECN1 by causing its dissociation from its inhibitors BCL2 and TAB2. Also plays a role in autophagy by acting as a selective autophagy receptor which recognizes and targets HIV-1 capsid protein p24 for autophagic destruction. The polypeptide is Tripartite motif-containing protein 5 (TRIM5) (Macaca mulatta (Rhesus macaque)).